Reading from the N-terminus, the 216-residue chain is Adenylate kinase (216 aa).

10-15 (GAGKGT) is an ATP binding site. An NMP region spans residues 30–59 (STGDMFRAAMKAETEMGLQAKSFIDKGALV). Residues Thr31, Arg36, 57–59 (ALV), 85–88 (GFPR), and Gln92 contribute to the AMP site. An LID region spans residues 126–163 (GRRICKECGATYHLEFNPPAKADVCDKCGGELYQRSDD). Residue Arg127 participates in ATP binding. Zn(2+)-binding residues include Cys130 and Cys133. Residue 136–137 (TY) participates in ATP binding. Cys150 and Cys153 together coordinate Zn(2+). Residues Arg160 and Arg171 each coordinate AMP. Gln199 contributes to the ATP binding site.

This sequence belongs to the adenylate kinase family. As to quaternary structure, monomer.

The protein resides in the cytoplasm. The enzyme catalyses AMP + ATP = 2 ADP. It participates in purine metabolism; AMP biosynthesis via salvage pathway; AMP from ADP: step 1/1. Its function is as follows. Catalyzes the reversible transfer of the terminal phosphate group between ATP and AMP. Plays an important role in cellular energy homeostasis and in adenine nucleotide metabolism. The chain is Adenylate kinase from Bacillus cereus (strain ATCC 10987 / NRS 248).